Consider the following 393-residue polypeptide: Flavohemoprotein (393 aa).

The 139-residue stretch at 1-139 folds into the Globin domain; sequence MLSNAQRALI…LADLLIEAEE (139 aa). Residue histidine 85 coordinates heme b. Residues tyrosine 95 and glutamate 138 each act as charge relay system in the active site. The interval 150–393 is reductase; the sequence is GGWRGVRRFR…FFGPAAALDA (244 aa). One can recognise an FAD-binding FR-type domain in the interval 153–256; the sequence is RGVRRFRVAR…FPPAGDFVLR (104 aa). FAD-binding positions include tyrosine 191 and 205–208; that span reads RNYS. 268–273 serves as a coordination point for NADP(+); sequence GVGITP. 384–387 provides a ligand contact to FAD; that stretch reads FFGP.

This sequence belongs to the globin family. Two-domain flavohemoproteins subfamily. It in the C-terminal section; belongs to the flavoprotein pyridine nucleotide cytochrome reductase family. Heme b serves as cofactor. The cofactor is FAD.

It carries out the reaction 2 nitric oxide + NADPH + 2 O2 = 2 nitrate + NADP(+) + H(+). It catalyses the reaction 2 nitric oxide + NADH + 2 O2 = 2 nitrate + NAD(+) + H(+). Its function is as follows. Is involved in NO detoxification in an aerobic process, termed nitric oxide dioxygenase (NOD) reaction that utilizes O(2) and NAD(P)H to convert NO to nitrate, which protects the bacterium from various noxious nitrogen compounds. Therefore, plays a central role in the inducible response to nitrosative stress. In Pseudomonas aeruginosa (strain ATCC 15692 / DSM 22644 / CIP 104116 / JCM 14847 / LMG 12228 / 1C / PRS 101 / PAO1), this protein is Flavohemoprotein.